A 175-amino-acid chain; its full sequence is Ribosome maturation factor RimM (175 aa).

The PRC barrel domain occupies 98–175; it reads EGEYYWYQLE…EMRVDWDADF (78 aa).

The protein belongs to the RimM family. As to quaternary structure, binds ribosomal protein uS19.

The protein localises to the cytoplasm. Functionally, an accessory protein needed during the final step in the assembly of 30S ribosomal subunit, possibly for assembly of the head region. Essential for efficient processing of 16S rRNA. May be needed both before and after RbfA during the maturation of 16S rRNA. It has affinity for free ribosomal 30S subunits but not for 70S ribosomes. The polypeptide is Ribosome maturation factor RimM (Pseudomonas paraeruginosa (strain DSM 24068 / PA7) (Pseudomonas aeruginosa (strain PA7))).